The primary structure comprises 859 residues: Catenin delta-1 (859 aa).

The stretch at 15-44 (SVRAQEAQFELLSRALEEERRHVTAQLDRV) forms a coiled coil. Positions 226-254 (IDGPDYATTGRRGANGGDPRRRLRSYEDP) are disordered. Positions 243 to 254 (DPRRRLRSYEDP) are enriched in basic and acidic residues. ARM repeat units lie at residues 279–317 (APNS…HLSY), 320–359 (EDVK…NLSY), 363–401 (RENK…VTGT), 402–446 (LWNL…RVEG), 464–503 (LRNI…LVDS), 513–552 (LRNI…VRRG), 574–614 (AQGY…NLCA), 621–660 (RCIR…NLCG), 661–700 (DNRN…CVIN), and 701–746 (TIHE…GFCL).

The protein belongs to the beta-catenin family. Interacts with C-cadherin and with zbtb33. As to expression, ubiquitously expressed.

Its subcellular location is the cell junction. It is found in the adherens junction. The protein resides in the cytoplasm. It localises to the nucleus. The protein localises to the cell membrane. Key regulator of cell-cell adhesion that associates with and regulates the cell adhesion properties of both C-, E- and N-cadherins, being critical for their surface stability. Beside cell-cell adhesion, regulates gene transcription through several transcription factors including ZBTB33/Kaiso2 and GLIS2, and the activity of Rho family GTPases and downstream cytoskeletal dynamics. Implicated both in cell transformation by SRC and in ligand-induced receptor signaling through the EGF, PDGF, CSF-1 and ERBB2 receptors. Required for gastrulation, axial elongation and development of the craniofacial skeleton and eye. This is Catenin delta-1 (ctnnd1) from Xenopus laevis (African clawed frog).